Consider the following 406-residue polypeptide: Cysteine desulfurase (406 aa).

An N6-(pyridoxal phosphate)lysine modification is found at K226. C364 functions as the Cysteine persulfide intermediate in the catalytic mechanism.

The protein belongs to the class-V pyridoxal-phosphate-dependent aminotransferase family. Csd subfamily. In terms of assembly, homodimer. Interacts with SufE and the SufBCD complex composed of SufB, SufC and SufD. The interaction with SufE is required to mediate the direct transfer of the sulfur atom from the S-sulfanylcysteine. Requires pyridoxal 5'-phosphate as cofactor.

It is found in the cytoplasm. It carries out the reaction (sulfur carrier)-H + L-cysteine = (sulfur carrier)-SH + L-alanine. The catalysed reaction is L-selenocysteine + AH2 = hydrogenselenide + L-alanine + A + H(+). It functions in the pathway cofactor biosynthesis; iron-sulfur cluster biosynthesis. Its function is as follows. Cysteine desulfurases mobilize the sulfur from L-cysteine to yield L-alanine, an essential step in sulfur metabolism for biosynthesis of a variety of sulfur-containing biomolecules. Component of the suf operon, which is activated and required under specific conditions such as oxidative stress and iron limitation. Acts as a potent selenocysteine lyase in vitro, that mobilizes selenium from L-selenocysteine. Selenocysteine lyase activity is however unsure in vivo. The polypeptide is Cysteine desulfurase (Yersinia pseudotuberculosis serotype IB (strain PB1/+)).